A 377-amino-acid chain; its full sequence is Queuine tRNA-ribosyltransferase (377 aa).

The Proton acceptor role is filled by D89. Substrate contacts are provided by residues 89–93 (DSGGF), D143, Q187, and G214. The segment at 245-251 (GVGKPED) is RNA binding. D264 functions as the Nucleophile in the catalytic mechanism. An RNA binding; important for wobble base 34 recognition region spans residues 269–273 (TRNAR). Zn(2+) is bound by residues C302, C304, C307, and H333.

The protein belongs to the queuine tRNA-ribosyltransferase family. As to quaternary structure, homodimer. Within each dimer, one monomer is responsible for RNA recognition and catalysis, while the other monomer binds to the replacement base PreQ1. It depends on Zn(2+) as a cofactor.

The enzyme catalyses 7-aminomethyl-7-carbaguanine + guanosine(34) in tRNA = 7-aminomethyl-7-carbaguanosine(34) in tRNA + guanine. It functions in the pathway tRNA modification; tRNA-queuosine biosynthesis. In terms of biological role, catalyzes the base-exchange of a guanine (G) residue with the queuine precursor 7-aminomethyl-7-deazaguanine (PreQ1) at position 34 (anticodon wobble position) in tRNAs with GU(N) anticodons (tRNA-Asp, -Asn, -His and -Tyr). Catalysis occurs through a double-displacement mechanism. The nucleophile active site attacks the C1' of nucleotide 34 to detach the guanine base from the RNA, forming a covalent enzyme-RNA intermediate. The proton acceptor active site deprotonates the incoming PreQ1, allowing a nucleophilic attack on the C1' of the ribose to form the product. After dissociation, two additional enzymatic reactions on the tRNA convert PreQ1 to queuine (Q), resulting in the hypermodified nucleoside queuosine (7-(((4,5-cis-dihydroxy-2-cyclopenten-1-yl)amino)methyl)-7-deazaguanosine). This is Queuine tRNA-ribosyltransferase from Shewanella denitrificans (strain OS217 / ATCC BAA-1090 / DSM 15013).